Here is a 518-residue protein sequence, read N- to C-terminus: Beta-TrCP (518 aa).

Residues 1–12 (MEGFSCSLQPPT) show a composition bias toward polar residues. Residues 1–24 (MEGFSCSLQPPTASEREDCNRDEP) form a disordered region. The segment covering 14 to 24 (SEREDCNRDEP) has biased composition (basic and acidic residues). The 39-residue stretch at 119–157 (DHIAENILSYLDAKSLCSAELVCKEWYRVTSDGMLWKKL) folds into the F-box domain. WD repeat units follow at residues 230 to 258 (ETSK…KIWD), 270 to 298 (GHTG…RVWD), 310 to 338 (HHCE…AVWD), 353 to 381 (GHRA…KVWN), 393 to 421 (GHKR…RLWD), 433 to 461 (GHEE…KVWD), and 482 to 510 (EHSG…LIWD).

In terms of assembly, part of a SCF (SKP1-cullin-F-box) ubiquitin-protein ligase complex. Interacts with fbxo5.

Functionally, substrate recognition component of a SCF (SKP1-CUL1-F-box protein) E3 ubiquitin-protein ligase complex which mediates the ubiquitination and subsequent proteasomal degradation of target proteins. Probably recognizes and binds to phosphorylated target proteins. May participate in Wnt signaling. The protein is Beta-TrCP (fbxw1) of Xenopus laevis (African clawed frog).